Reading from the N-terminus, the 515-residue chain is UBP3-associated protein BRE5 (515 aa).

One can recognise an NTF2 domain in the interval 8–140 (ICFAFLQNYY…FDITNDIIRF (133 aa)). A compositionally biased stretch (low complexity) spans 157–166 (QSNEENSVSA). Disordered regions lie at residues 157 to 410 (QSNE…PVFS) and 485 to 515 (KTVKKPTSNNPPGIFTNGTRSHRKQPLKRKD). Residues 168–201 (EEDKIRHESGVEKEKEKEKSPEISKPKAKKETVK) are compositionally biased toward basic and acidic residues. The residue at position 187 (S187) is a Phosphoserine. Residues 202-213 (DTTAPTESSTQE) show a composition bias toward polar residues. 2 stretches are compositionally biased toward basic and acidic residues: residues 262–282 (LNEKSHKAEKKAAPIKTKEGS) and 299–319 (EVSDEKPVPGGVKEAETEIKP). S282 bears the Phosphoserine mark. The span at 330–341 (SGNNASTPSSSP) shows a compositional bias: polar residues. T336 is modified (phosphothreonine). Position 340 is a phosphoserine (S340). The segment covering 374 to 396 (IRPETLPKKPTERKFEMGNRRDN) has biased composition (basic and acidic residues). Position 398 is a phosphoserine (S398). In terms of domain architecture, RRM spans 418-494 (YPIYIRGTNG…KTVKKPTSNN (77 aa)). Over residues 489 to 503 (KPTSNNPPGIFTNGT) the composition is skewed to polar residues. Positions 504–515 (RSHRKQPLKRKD) are enriched in basic residues.

As to quaternary structure, heterotetramer with UBP3; contains two molecules of BRE5 and two molecules of UBP3. Forms a complex composed of CDC48, DOA1, deubiquitinase UBP3 and probably BRE5. Within the complex, interacts (via C-terminus) with CDC48; the interaction is direct and UBP3-independent.

Has a role in de-ubiquitination. In conjunction with UBP3, cleaves ubiquitin, leading to the subsequent mono-ubiquitination of sec23. In Saccharomyces cerevisiae (strain ATCC 204508 / S288c) (Baker's yeast), this protein is UBP3-associated protein BRE5 (BRE5).